The primary structure comprises 290 residues: 33 kDa chaperonin (290 aa).

Cystine bridges form between Cys235–Cys237 and Cys268–Cys271.

This sequence belongs to the HSP33 family. Under oxidizing conditions two disulfide bonds are formed involving the reactive cysteines. Under reducing conditions zinc is bound to the reactive cysteines and the protein is inactive.

The protein localises to the cytoplasm. Functionally, redox regulated molecular chaperone. Protects both thermally unfolding and oxidatively damaged proteins from irreversible aggregation. Plays an important role in the bacterial defense system toward oxidative stress. The polypeptide is 33 kDa chaperonin (Streptococcus pyogenes serotype M28 (strain MGAS6180)).